Consider the following 433-residue polypeptide: ATP-dependent protease ATPase subunit HslU (433 aa).

Residues valine 18, 60-65, aspartate 246, glutamate 311, and arginine 383 contribute to the ATP site; that span reads GVGKTE.

It belongs to the ClpX chaperone family. HslU subfamily. A double ring-shaped homohexamer of HslV is capped on each side by a ring-shaped HslU homohexamer. The assembly of the HslU/HslV complex is dependent on binding of ATP.

It is found in the cytoplasm. Functionally, ATPase subunit of a proteasome-like degradation complex; this subunit has chaperone activity. The binding of ATP and its subsequent hydrolysis by HslU are essential for unfolding of protein substrates subsequently hydrolyzed by HslV. HslU recognizes the N-terminal part of its protein substrates and unfolds these before they are guided to HslV for hydrolysis. The chain is ATP-dependent protease ATPase subunit HslU from Rhodopseudomonas palustris (strain BisA53).